Consider the following 781-residue polypeptide: Penicillin-binding protein 1B (781 aa).

The transglycosylase stretch occupies residues 151–322; sequence FRLAPKLIAM…SLYNPWRNPQ (172 aa). Glutamate 188 (proton donor; for transglycosylase activity) is an active-site residue. Residues 415–702 form a transpeptidase region; the sequence is SQLQLKMKNP…ALQIYKDYLN (288 aa). Serine 466 acts as the Acyl-ester intermediate; for transpeptidase activity in catalysis. Over residues 749–768 the composition is skewed to low complexity; the sequence is ETSSPSLTPTTETETPPQES. The segment at 749–781 is disordered; it reads ETSSPSLTPTTETETPPQESLWDVLDNPNPPAQ.

This sequence in the N-terminal section; belongs to the glycosyltransferase 51 family. The protein in the C-terminal section; belongs to the transpeptidase family.

It localises to the cell inner membrane. The enzyme catalyses [GlcNAc-(1-&gt;4)-Mur2Ac(oyl-L-Ala-gamma-D-Glu-L-Lys-D-Ala-D-Ala)](n)-di-trans,octa-cis-undecaprenyl diphosphate + beta-D-GlcNAc-(1-&gt;4)-Mur2Ac(oyl-L-Ala-gamma-D-Glu-L-Lys-D-Ala-D-Ala)-di-trans,octa-cis-undecaprenyl diphosphate = [GlcNAc-(1-&gt;4)-Mur2Ac(oyl-L-Ala-gamma-D-Glu-L-Lys-D-Ala-D-Ala)](n+1)-di-trans,octa-cis-undecaprenyl diphosphate + di-trans,octa-cis-undecaprenyl diphosphate + H(+). The catalysed reaction is Preferential cleavage: (Ac)2-L-Lys-D-Ala-|-D-Ala. Also transpeptidation of peptidyl-alanyl moieties that are N-acyl substituents of D-alanine.. It participates in cell wall biogenesis; peptidoglycan biosynthesis. In terms of biological role, cell wall formation. Synthesis of cross-linked peptidoglycan from the lipid intermediates. The enzyme has a penicillin-insensitive transglycosylase N-terminal domain (formation of linear glycan strands) and a penicillin-sensitive transpeptidase C-terminal domain (cross-linking of the peptide subunits). This is Penicillin-binding protein 1B (mrcB) from Haemophilus influenzae (strain ATCC 51907 / DSM 11121 / KW20 / Rd).